A 103-amino-acid chain; its full sequence is UPF0235 protein Rleg2_3707 (103 aa).

It belongs to the UPF0235 family.

The protein is UPF0235 protein Rleg2_3707 of Rhizobium leguminosarum bv. trifolii (strain WSM2304).